A 102-amino-acid chain; its full sequence is UPF0213 protein Spro_0507 (102 aa).

The region spanning 6-81 (PTWHLYMLRM…KQLSKTQKER (76 aa)) is the GIY-YIG domain.

This sequence belongs to the UPF0213 family.

The protein is UPF0213 protein Spro_0507 of Serratia proteamaculans (strain 568).